Reading from the N-terminus, the 200-residue chain is Recombination protein RecR (200 aa).

A C4-type zinc finger spans residues 57-72 (CRQCRTLTEQELCPQC). Residues 80–175 (TQLCVVEGPM…VASRIAHGVP (96 aa)) enclose the Toprim domain.

Belongs to the RecR family.

Functionally, may play a role in DNA repair. It seems to be involved in an RecBC-independent recombinational process of DNA repair. It may act with RecF and RecO. This is Recombination protein RecR from Pseudomonas putida (strain W619).